A 370-amino-acid chain; its full sequence is MFKVGMINLGDKQSTIVVAMSGGVDSSAVAAMLHEQGHNVIGITLQLYDHGMAVGKKNACCAGQDIYDAKMVANKLGIPHYVLDYENKFKESVIDNFVDSYLQGETPLPCVQCNKSVKFRDLIKTARELGADKLATGHYVRKINGDNGAELHTGLDPAKDQSYFLFTTTKEQLEYLRFPLGGLTKDETRKLASKFGLEVADKPDSQDICFIPDGNYKSVINKIRPNSSESGKIIHVNGFELGEHSGIINYTIGQRRGLGIAYNEPLYVVKIDPKDNIVYVGPESALNVQEFIIRDVNWLADEIKDNEKLEVAVKIRSTRPPRLAEISKLGDDKMKVKFLCEEKAVAPGQACVIYAGERVLGGGWITREIR.

ATP-binding positions include 19–26 and L45; that span reads AMSGGVDS. The active-site Nucleophile is the C113. A disulfide bridge connects residues C113 and C209. G137 provides a ligand contact to ATP. The interaction with tRNA stretch occupies residues 159 to 161; it reads KDQ. The active-site Cysteine persulfide intermediate is C209.

It belongs to the MnmA/TRMU family.

Its subcellular location is the cytoplasm. It catalyses the reaction S-sulfanyl-L-cysteinyl-[protein] + uridine(34) in tRNA + AH2 + ATP = 2-thiouridine(34) in tRNA + L-cysteinyl-[protein] + A + AMP + diphosphate + H(+). Catalyzes the 2-thiolation of uridine at the wobble position (U34) of tRNA, leading to the formation of s(2)U34. This is tRNA-specific 2-thiouridylase MnmA from Rickettsia conorii (strain ATCC VR-613 / Malish 7).